A 504-amino-acid polypeptide reads, in one-letter code: Maturase K (504 aa).

It belongs to the intron maturase 2 family. MatK subfamily.

It localises to the plastid. The protein localises to the chloroplast. Usually encoded in the trnK tRNA gene intron. Probably assists in splicing its own and other chloroplast group II introns. This chain is Maturase K, found in Carpinus betulus (European hornbeam).